The sequence spans 128 residues: UPF0102 protein Mext_0406 (128 aa).

It belongs to the UPF0102 family.

This is UPF0102 protein Mext_0406 from Methylorubrum extorquens (strain PA1) (Methylobacterium extorquens).